A 461-amino-acid chain; its full sequence is V-type ATP synthase beta chain (461 aa).

It belongs to the ATPase alpha/beta chains family.

Functionally, produces ATP from ADP in the presence of a proton gradient across the membrane. The V-type beta chain is a regulatory subunit. This chain is V-type ATP synthase beta chain, found in Clostridium botulinum (strain 657 / Type Ba4).